The following is a 443-amino-acid chain: 23S rRNA (uracil(1939)-C(5))-methyltransferase RlmD (443 aa).

The region spanning 12–70 (SKQLSAKVSLQVTRLDHLGAGIAQHNGKVVFIPGVLPGEKAMVQLTEQKKRYSRAKLLN) is the TRAM domain. C83, C89, C92, and C171 together coordinate [4Fe-4S] cluster. Q277, F306, N311, E327, D354, and D374 together coordinate S-adenosyl-L-methionine. C400 serves as the catalytic Nucleophile.

This sequence belongs to the class I-like SAM-binding methyltransferase superfamily. RNA M5U methyltransferase family. RlmD subfamily.

The enzyme catalyses uridine(1939) in 23S rRNA + S-adenosyl-L-methionine = 5-methyluridine(1939) in 23S rRNA + S-adenosyl-L-homocysteine + H(+). Its function is as follows. Catalyzes the formation of 5-methyl-uridine at position 1939 (m5U1939) in 23S rRNA. The chain is 23S rRNA (uracil(1939)-C(5))-methyltransferase RlmD from Shewanella woodyi (strain ATCC 51908 / MS32).